The chain runs to 103 residues: Small ribosomal subunit protein uS10 (103 aa).

It belongs to the universal ribosomal protein uS10 family. In terms of assembly, part of the 30S ribosomal subunit.

Its function is as follows. Involved in the binding of tRNA to the ribosomes. This chain is Small ribosomal subunit protein uS10, found in Shewanella amazonensis (strain ATCC BAA-1098 / SB2B).